A 302-amino-acid chain; its full sequence is Nucleotide-binding protein Strop_3101 (302 aa).

Residue 26-33 (GVSGGGRS) participates in ATP binding. Position 77-80 (77-80 (DVRS)) interacts with GTP.

Belongs to the RapZ-like family.

Functionally, displays ATPase and GTPase activities. The protein is Nucleotide-binding protein Strop_3101 of Salinispora tropica (strain ATCC BAA-916 / DSM 44818 / JCM 13857 / NBRC 105044 / CNB-440).